Consider the following 588-residue polypeptide: Transcriptional regulatory protein ASH1 (588 aa).

Ser-56 is subject to Phosphoserine. Disordered stretches follow at residues 85-109, 377-398, and 417-495; these read SNTAPASPHHMDYNPISSLTPGNSP, SNNSKSNVRKPSKNKISKQASN, and SSVS…TRHT. Residues 99 to 109 are compositionally biased toward polar residues; it reads PISSLTPGNSP. The segment covering 383 to 392 has biased composition (basic residues); the sequence is NVRKPSKNKI. Positions 417–433 are enriched in low complexity; sequence SSVSASSSPSPSTPTKS. The residue at position 465 (Ser-465) is a Phosphoserine. Residues 470-493 show a composition bias toward low complexity; that stretch reads PRRSSNSSITKKGSRRSSGSSPTR. Residues 499–526 form a GATA-type; atypical zinc finger; the sequence is CVSCHSSDSPCWRPSWSPRKQDQLCNSC.

Component of the RPD3C(L) complex composed of at least ASH1, CTI6, DEP1, PHO23, RPD3, RXT2, RXT3, SAP30, SDS3, SIN3, UME1 and UME6.

It is found in the nucleus. Functionally, component of the RPD3C(L) histone deacetylase complex (HDAC). Responsible for the deacetylation of lysine residues on the N-terminal part of the core histones (H2A, H2B, H3 and H4). Histone deacetylation gives a tag for epigenetic repression and plays an important role in transcriptional regulation, cell cycle progression and developmental events. ASH1 is necessary to repress HO in daughter cells to block mating-type switching through its binding to HO promoter 5'-YTGAT-3' sites. Also involved in pseudohyphal growth. The sequence is that of Transcriptional regulatory protein ASH1 (ASH1) from Saccharomyces cerevisiae (strain ATCC 204508 / S288c) (Baker's yeast).